Reading from the N-terminus, the 100-residue chain is NADH-quinone oxidoreductase subunit K (100 aa).

Transmembrane regions (helical) follow at residues 4-24, 28-48, and 60-80; these read LQHG…GLLI, LLFM…AFVV, and VMYI…LALL.

It belongs to the complex I subunit 4L family. In terms of assembly, NDH-1 is composed of 13 different subunits. Subunits NuoA, H, J, K, L, M, N constitute the membrane sector of the complex.

Its subcellular location is the cell inner membrane. The catalysed reaction is a quinone + NADH + 5 H(+)(in) = a quinol + NAD(+) + 4 H(+)(out). NDH-1 shuttles electrons from NADH, via FMN and iron-sulfur (Fe-S) centers, to quinones in the respiratory chain. The immediate electron acceptor for the enzyme in this species is believed to be ubiquinone. Couples the redox reaction to proton translocation (for every two electrons transferred, four hydrogen ions are translocated across the cytoplasmic membrane), and thus conserves the redox energy in a proton gradient. This Edwardsiella ictaluri (strain 93-146) protein is NADH-quinone oxidoreductase subunit K.